Here is a 358-residue protein sequence, read N- to C-terminus: UPF0283 membrane protein PM0909 (358 aa).

Helical transmembrane passes span 62–82, 90–110, and 213–233; these read LALT…QWLV, WIYF…VSSL, and ALEA…MFFL.

Belongs to the UPF0283 family.

Its subcellular location is the cell inner membrane. This Pasteurella multocida (strain Pm70) protein is UPF0283 membrane protein PM0909.